The chain runs to 274 residues: MAHYFVGDVQGCFAELQRLLAKVDFNPSRDELWAVGDLVARGPDSLATLRFFQSLGDAGKIVLGNHDLHLLALHGKLKRDKPSDNLTPLLNAPDISSLIDWLRQQPLMRELPEHKVIMTHAGVPPQWSLEVLRQESLLVSQALKQNDYLDALISQMYTDTAERWDPSAIGINRLRFCINALTRMRYLYVDGHLDFDCKQPPEDCSNPQLRPWFEFTSTLRNSHILVFGHWAALMGKVDAPNLKALDTGCCWGEHLTLWHLEKDQKITQKKLKKS.

This sequence belongs to the Ap4A hydrolase family.

The enzyme catalyses P(1),P(4)-bis(5'-adenosyl) tetraphosphate + H2O = 2 ADP + 2 H(+). Its function is as follows. Hydrolyzes diadenosine 5',5'''-P1,P4-tetraphosphate to yield ADP. The polypeptide is Bis(5'-nucleosyl)-tetraphosphatase, symmetrical (Shewanella oneidensis (strain ATCC 700550 / JCM 31522 / CIP 106686 / LMG 19005 / NCIMB 14063 / MR-1)).